The primary structure comprises 159 residues: Dynein 18 kDa light chain, flagellar outer arm (159 aa).

3 consecutive EF-hand domains span residues 18–53 (EEMD…LGQN), 54–89 (PTEE…NKQM), and 129–159 (ELTV…ALLS). D31, D33, S35, T37, E42, D67, D69, S71, C73, and E78 together coordinate Ca(2+).

Consists of at least 3 heavy chains (alpha, beta and gamma), 2 intermediate chains and 8 light chains.

The protein resides in the cell projection. It localises to the cilium. It is found in the flagellum. In terms of biological role, may be involved in the calcium-mediated regulation of dynein motor function. Binds 1 mole of calcium. This chain is Dynein 18 kDa light chain, flagellar outer arm, found in Chlamydomonas reinhardtii (Chlamydomonas smithii).